A 291-amino-acid chain; its full sequence is Venom metalloproteinase inhibitor DM43 (291 aa).

Ig-like V-type domains lie at 22-79 and 114-171; these read TNVT…ILTS and GLET…PASA. N23 carries an N-linked (GlcNAc...) asparagine glycan. Intrachain disulfides connect C28–C74 and C121–C163. N-linked (GlcNAc...) asparagine glycosylation is found at N156, N160, and N175. Residues 191 to 288 enclose the Ig-like V-type 3 domain; it reads PKANFYILND…DSNVLELDLS (98 aa). A disulfide bridge connects residues C213 and C265.

In terms of assembly, homodimer. In terms of processing, N-glycosylated. As to expression, blood and milk.

Functionally, metalloproteinase inhibitor. The chain is Venom metalloproteinase inhibitor DM43 from Didelphis marsupialis (Southern opossum).